A 389-amino-acid polypeptide reads, in one-letter code: Jasmonate O-methyltransferase (389 aa).

Tyrosine 18 contributes to the S-adenosyl-L-homocysteine binding site. Position 25 (glutamine 25) interacts with jasmonate. Cysteine 60, asparagine 65, aspartate 97, leucine 98, serine 142, and phenylalanine 143 together coordinate S-adenosyl-L-homocysteine. Residues histidine 163 and tryptophan 164 each contribute to the jasmonate site. Residues asparagine 186, aspartate 272, phenylalanine 274, and asparagine 275 each coordinate Mg(2+).

It belongs to the methyltransferase superfamily. Type-7 methyltransferase family. Mg(2+) serves as cofactor. As to expression, expressed in rosettes, cauline leaves and developing flowers but not in young seedlings.

Its subcellular location is the cytoplasm. The protein resides in the nucleus. The enzyme catalyses jasmonate + S-adenosyl-L-methionine = methyl (-)-jasmonate + S-adenosyl-L-homocysteine. Its pathway is lipid metabolism; oxylipin biosynthesis. Catalyzes the methylation of jasmonate into methyljasmonate, a plant volatile that acts as an important cellular regulator mediating diverse developmental processes and defense responses. The protein is Jasmonate O-methyltransferase of Arabidopsis thaliana (Mouse-ear cress).